We begin with the raw amino-acid sequence, 624 residues long: Atypical kinase COQ8B, mitochondrial (624 aa).

The tract at residues 90–117 (EMPPDFSSKDGRGETSETPVGAATGTIK) is disordered. Residues 189–205 (LANFGGLAVGLGIGAIA) traverse the membrane as a helical segment. Residues 249-252 (KIGQ) carry the KxGQ motif motif. The Protein kinase domain occupies 285–517 (MHKVLEEELG…ATVLKKSKDL (233 aa)). Residues 310–313 (AAAS) carry the AAAS motif motif. Residues Ser-313, Lys-331, and 418–421 (MELV) each bind ATP. Residue Asp-461 is the Proton acceptor of the active site. Residues Asn-466 and Asp-480 each contribute to the ATP site.

The protein belongs to the protein kinase superfamily. ADCK protein kinase family. In terms of assembly, homodimer; homodimerizes via its transmembrane region. Interacts with the multi-subunit COQ enzyme complex.

Its subcellular location is the mitochondrion membrane. It localises to the cytoplasm. The protein localises to the cytosol. It is found in the cell membrane. The protein operates within cofactor biosynthesis; ubiquinone biosynthesis. Functionally, atypical kinase involved in the biosynthesis of coenzyme Q, also named ubiquinone, an essential lipid-soluble electron transporter for aerobic cellular respiration. Its substrate specificity is still unclear: may act as a protein kinase that mediates phosphorylation of COQ3. According to other reports, acts as a small molecule kinase, possibly a lipid kinase that phosphorylates a prenyl lipid in the ubiquinone biosynthesis pathway, as suggested by its ability to bind coenzyme Q lipid intermediates. However, the small molecule kinase activity was not confirmed by another publication. Required for podocyte migration. This chain is Atypical kinase COQ8B, mitochondrial, found in Danio rerio (Zebrafish).